Here is a 184-residue protein sequence, read N- to C-terminus: Probable type 3 secretion system regulator AscH (184 aa).

A disordered region spans residues 1–25 (MKIEGSDQLGGEQPQRQPLPPESMA).

Belongs to the YopR family.

The protein resides in the secreted. May be involved in the regulation of the assembly of the type III secretion system (T3SS), also called injectisome, which is used to inject bacterial effector proteins into eukaryotic host cells. May control the polymerization of the needle. This Aeromonas salmonicida subsp. salmonicida protein is Probable type 3 secretion system regulator AscH.